A 298-amino-acid chain; its full sequence is UPF0282 protein Kcr_0286 (298 aa).

The protein belongs to the UPF0282 family.

In Korarchaeum cryptofilum (strain OPF8), this protein is UPF0282 protein Kcr_0286.